Reading from the N-terminus, the 272-residue chain is Probable ribosomal RNA small subunit methyltransferase A (272 aa).

Positions 23, 25, 50, 71, 95, and 110 each coordinate S-adenosyl-L-methionine.

It belongs to the class I-like SAM-binding methyltransferase superfamily. rRNA adenine N(6)-methyltransferase family. RsmA subfamily.

It localises to the cytoplasm. Specifically dimethylates two adjacent adenosines in the loop of a conserved hairpin near the 3'-end of 16S rRNA in the 30S particle. May play a critical role in biogenesis of 30S subunits. This is Probable ribosomal RNA small subunit methyltransferase A from Thermococcus onnurineus (strain NA1).